The primary structure comprises 229 residues: 3-isopropylmalate dehydratase small subunit (229 aa).

The disordered stretch occupies residues 208–229 (KIESAREPDDDWTGPLADRGII).

The protein belongs to the LeuD family. LeuD type 1 subfamily. Heterodimer of LeuC and LeuD.

It carries out the reaction (2R,3S)-3-isopropylmalate = (2S)-2-isopropylmalate. The protein operates within amino-acid biosynthesis; L-leucine biosynthesis; L-leucine from 3-methyl-2-oxobutanoate: step 2/4. Its function is as follows. Catalyzes the isomerization between 2-isopropylmalate and 3-isopropylmalate, via the formation of 2-isopropylmaleate. This is 3-isopropylmalate dehydratase small subunit from Bifidobacterium longum subsp. infantis (strain ATCC 15697 / DSM 20088 / JCM 1222 / NCTC 11817 / S12).